The following is a 164-amino-acid chain: Cytochrome c-type biogenesis protein CcmE (164 aa).

Over 1-8 (MNPRRKQR) the chain is Cytoplasmic. A helical; Signal-anchor for type II membrane protein transmembrane segment spans residues 9–29 (LAVVGIIGFLIVSAVGLMLYA). Topologically, residues 30-164 (LNDSIDLFYT…YESSNGAGSK (135 aa)) are periplasmic. 2 residues coordinate heme: H128 and Y132. The interval 142–164 (KGIKHVKPENMPTYESSNGAGSK) is disordered. The span at 154–164 (TYESSNGAGSK) shows a compositional bias: polar residues.

This sequence belongs to the CcmE/CycJ family.

It localises to the cell inner membrane. Functionally, heme chaperone required for the biogenesis of c-type cytochromes. Transiently binds heme delivered by CcmC and transfers the heme to apo-cytochromes in a process facilitated by CcmF and CcmH. This is Cytochrome c-type biogenesis protein CcmE from Alteromonas mediterranea (strain DSM 17117 / CIP 110805 / LMG 28347 / Deep ecotype).